The chain runs to 328 residues: Porphobilinogen deaminase (328 aa).

An S-(dipyrrolylmethanemethyl)cysteine modification is found at C250.

It belongs to the HMBS family. As to quaternary structure, monomer. Dipyrromethane is required as a cofactor.

The enzyme catalyses 4 porphobilinogen + H2O = hydroxymethylbilane + 4 NH4(+). It functions in the pathway porphyrin-containing compound metabolism; protoporphyrin-IX biosynthesis; coproporphyrinogen-III from 5-aminolevulinate: step 2/4. Tetrapolymerization of the monopyrrole PBG into the hydroxymethylbilane pre-uroporphyrinogen in several discrete steps. The protein is Porphobilinogen deaminase of Burkholderia ambifaria (strain ATCC BAA-244 / DSM 16087 / CCUG 44356 / LMG 19182 / AMMD) (Burkholderia cepacia (strain AMMD)).